Here is a 136-residue protein sequence, read N- to C-terminus: Peptide methionine sulfoxide reductase B5 (136 aa).

A MsrB domain is found at 14–135 (DEEWRAVLSP…NSVSIKFTPA (122 aa)). The Zn(2+) site is built by Cys-53, Cys-56, Cys-99, and Cys-102. A disulfide bridge connects residues Cys-71 and Cys-124. Cys-124 functions as the Nucleophile in the catalytic mechanism.

The protein belongs to the MsrB Met sulfoxide reductase family. The cofactor is Zn(2+).

Its subcellular location is the cytoplasm. It is found in the cytosol. It carries out the reaction L-methionyl-[protein] + [thioredoxin]-disulfide + H2O = L-methionyl-(R)-S-oxide-[protein] + [thioredoxin]-dithiol. Its function is as follows. Catalyzes the reduction of methionine sulfoxide (MetSO) to methionine in proteins. Plays a protective role against oxidative stress by restoring activity to proteins that have been inactivated by methionine oxidation. MSRB family specifically reduces the MetSO R-enantiomer. The polypeptide is Peptide methionine sulfoxide reductase B5 (MSRB5) (Oryza sativa subsp. japonica (Rice)).